Consider the following 347-residue polypeptide: Isopentenyl-diphosphate delta-isomerase (347 aa).

11-12 (RK) is a binding site for substrate. Residues 72–74 (AMT), S102, and N131 contribute to the FMN site. Q161 provides a ligand contact to substrate. E162 is a binding site for Mg(2+). FMN-binding positions include K192, T222, and 287–288 (AG).

This sequence belongs to the IPP isomerase type 2 family. Homooctamer. Dimer of tetramers. FMN is required as a cofactor. Requires NADPH as cofactor. Mg(2+) serves as cofactor.

It localises to the cytoplasm. The enzyme catalyses isopentenyl diphosphate = dimethylallyl diphosphate. In terms of biological role, involved in the biosynthesis of isoprenoids. Catalyzes the 1,3-allylic rearrangement of the homoallylic substrate isopentenyl (IPP) to its allylic isomer, dimethylallyl diphosphate (DMAPP). The protein is Isopentenyl-diphosphate delta-isomerase of Lactococcus lactis subsp. lactis (strain IL1403) (Streptococcus lactis).